A 503-amino-acid chain; its full sequence is Aromatase 1 (503 aa).

Cys-437 serves as a coordination point for heme.

It belongs to the cytochrome P450 family. The cofactor is heme.

Its subcellular location is the membrane. The catalysed reaction is testosterone + 3 reduced [NADPH--hemoprotein reductase] + 3 O2 = 17beta-estradiol + formate + 3 oxidized [NADPH--hemoprotein reductase] + 4 H2O + 4 H(+). The enzyme catalyses androst-4-ene-3,17-dione + 3 reduced [NADPH--hemoprotein reductase] + 3 O2 = estrone + formate + 3 oxidized [NADPH--hemoprotein reductase] + 4 H2O + 4 H(+). In terms of biological role, catalyzes the formation of aromatic C18 estrogens from C19 androgens. This Sus scrofa (Pig) protein is Aromatase 1 (CYP19A1).